Consider the following 265-residue polypeptide: Serine protease ami (265 aa).

The N-terminal stretch at 1-21 (MNVSWALLAVVLVLTVATYEC) is a signal peptide. Residue asparagine 2 is glycosylated (N-linked (GlcNAc...) asparagine). Positions 22–26 (RPRGR) are cleaved as a propeptide — activation peptide. In terms of domain architecture, Peptidase S1 spans 27–254 (ILGGQDSKAE…YKSWIMESMY (228 aa)). Cysteine 52 and cysteine 68 form a disulfide bridge. Histidine 67 acts as the Charge relay system in catalysis. N-linked (GlcNAc...) asparagine glycosylation is found at asparagine 71, asparagine 74, and asparagine 108. Aspartate 115 serves as the catalytic Charge relay system. 3 cysteine pairs are disulfide-bonded: cysteine 149/cysteine 215, cysteine 180/cysteine 196, and cysteine 205/cysteine 230. Serine 209 acts as the Charge relay system in catalysis. N-linked (GlcNAc...) asparagine glycosylation is present at asparagine 255.

This sequence belongs to the peptidase S1 family.

It is found in the secreted. Its function is as follows. Probable serine protease. The polypeptide is Serine protease ami (Xenopus tropicalis (Western clawed frog)).